The following is a 533-amino-acid chain: Flavin-containing monooxygenase 5 (533 aa).

Dimethylated arginine is present on Arg-5. FAD is bound by residues 10–14, Glu-33, and 41–42; these read GAGAS and LW. The residue at position 54 (Ser-54) is a Phosphoserine. Residue Tyr-56 is modified to Phosphotyrosine. Position 58 is a phosphoserine (Ser-58). 62–63 contacts FAD; that stretch reads NT. 196-199 provides a ligand contact to NADP(+); the sequence is SGGD. Ser-280 bears the Phosphoserine mark. The residue at position 284 (Thr-284) is a Phosphothreonine. Phosphoserine is present on Ser-401. The helical transmembrane segment at 513–533 threads the bilayer; that stretch reads LVTVRVLMLAVAFFAVILAYF.

It belongs to the FMO family. FAD is required as a cofactor. As to expression, expressed in liver (at protein level). Expressed in the mucosal epithelium of the gastrointestinal tract.

The protein resides in the microsome membrane. Its subcellular location is the endoplasmic reticulum membrane. The catalysed reaction is N,N-dimethylaniline + NADPH + O2 + H(+) = N,N-dimethylaniline N-oxide + NADP(+) + H2O. The enzyme catalyses NADPH + O2 + H(+) = H2O2 + NADP(+). It carries out the reaction heptan-2-one + NADPH + O2 + H(+) = pentyl acetate + NADP(+) + H2O. It catalyses the reaction octan-3-one + NADPH + O2 + H(+) = pentyl propanoate + NADP(+) + H2O. The catalysed reaction is octan-3-one + NADPH + O2 + H(+) = ethyl hexanoate + NADP(+) + H2O. The enzyme catalyses hexan-3-one + NADPH + O2 + H(+) = ethyl butanoate + NADP(+) + H2O. It carries out the reaction hexan-3-one + NADPH + O2 + H(+) = propyl propanoate + NADP(+) + H2O. It catalyses the reaction heptan-4-one + NADPH + O2 + H(+) = propyl butanoate + NADP(+) + H2O. The catalysed reaction is (2E)-geranial + NADPH + O2 + H(+) = (1E)-2,6-dimethylhepta-1,5-dien-1-yl formate + NADP(+) + H2O. The enzyme catalyses sulcatone + NADPH + O2 + H(+) = 4-methylpent-3-en-1-yl acetate + NADP(+) + H2O. In terms of biological role, acts as a Baeyer-Villiger monooxygenase on a broad range of substrates. Catalyzes the insertion of an oxygen atom into a carbon-carbon bond adjacent to a carbonyl, which converts ketones to esters. Active on diverse carbonyl compounds, whereas soft nucleophiles are mostly non- or poorly reactive. In contrast with other forms of FMO it is non- or poorly active on 'classical' substrates such as drugs, pesticides, and dietary components containing soft nucleophilic heteroatoms. Able to oxidize drug molecules bearing a carbonyl group on an aliphatic chain, such as nabumetone and pentoxifylline. Also, in the absence of substrates, shows slow but yet significant NADPH oxidase activity. Acts as a positive modulator of cholesterol biosynthesis as well as glucose homeostasis, promoting metabolic aging via pleiotropic effects. The chain is Flavin-containing monooxygenase 5 from Mus musculus (Mouse).